The following is a 448-amino-acid chain: Adenylosuccinate synthetase 1 (448 aa).

GTP-binding positions include 22–28 (GDEGKGK) and 50–52 (GHT). Catalysis depends on D23, which acts as the Proton acceptor. Mg(2+) contacts are provided by D23 and G50. Residues 23 to 26 (DEGK), 48 to 51 (NAGH), T139, R153, Q234, T249, and R321 each bind IMP. H51 serves as the catalytic Proton donor. 317–323 (SVTGRPR) is a substrate binding site. GTP is bound by residues R323, 349–351 (KLD), and 431–433 (STG).

The protein belongs to the adenylosuccinate synthetase family. Homodimer. It depends on Mg(2+) as a cofactor.

It is found in the cytoplasm. The catalysed reaction is IMP + L-aspartate + GTP = N(6)-(1,2-dicarboxyethyl)-AMP + GDP + phosphate + 2 H(+). Its pathway is purine metabolism; AMP biosynthesis via de novo pathway; AMP from IMP: step 1/2. In terms of biological role, plays an important role in the de novo pathway of purine nucleotide biosynthesis. Catalyzes the first committed step in the biosynthesis of AMP from IMP. The chain is Adenylosuccinate synthetase 1 from Burkholderia lata (strain ATCC 17760 / DSM 23089 / LMG 22485 / NCIMB 9086 / R18194 / 383).